Reading from the N-terminus, the 630-residue chain is MITIDESRNNLFDALGLQRLKDSYMKEDESSPQERFAFIARQFCADDEPLAQRLYDYMSQHWLSPSSPQLSFGRTKQGLPIACFLPYLHDTARGLIDTWAEVSELSMIGGGIGLGVGIRQPDEKSVGIIPHLRTYDASCTAYKQGQTRRGSYAAYLDISHPEILSFLNTRRVGGDHNYKLLNLHNGVNVPDSFMKKIWILSTLAPFVKMDPCPTTETLFKKAVTTLKDSRYFGADDRWLGEVSFAALAEQLDVVNRWDLIDPHTGKVKETIKATELWERIILTRAETGEPYIHWIDTSNRALPQFQKNLGLSIRQSNLCSEVVLPTDETRTAVCCLASLNLDYFDKWCNNEQFYLDVATYLDNVLQYFIDHAPPTLKRAVHSARSERAIGIGALGFHSYLQSKMVDIESLPAYLINKKIFKTISSHLERVNLELGELRGEAPDCVGTGRRFSHMTAIAPNATSSIIMGNTSPSCEPFRANIYKQDTISGSFVTYNKHLKRLLEERIPDNQARERVWSSIKMHDGSVQHLNQLTVQEKKVFKTWPEINQLSLVMLAADRQKWIDQSQSTSLFFNPDERISYVHKIHLKAWLHGLKTLYYFRSRKILTVDKVHHTTTTADPKTENDCTFCEG.

Residues Ser-67, 82–83 (AC), Gly-111, 317–321 (NLCSE), and 459–463 (PNATS) each bind substrate. Residues Cys-83 and Cys-334 are joined by a disulfide bond. The active-site Proton acceptor is the Asn-317. The active-site Cysteine radical intermediate is Cys-319. The Proton acceptor role is filled by Glu-321.

Belongs to the ribonucleoside diphosphate reductase large chain family. In terms of assembly, heterotetramer composed of a homodimer of the large subunit (R1) and a homodimer of the small subunit (R2). Larger multisubunit protein complex are also active, composed of (R1)n(R2)n.

The enzyme catalyses a 2'-deoxyribonucleoside 5'-diphosphate + [thioredoxin]-disulfide + H2O = a ribonucleoside 5'-diphosphate + [thioredoxin]-dithiol. Its activity is regulated as follows. Under complex allosteric control mediated by deoxynucleoside triphosphates and ATP binding. The type of nucleotide bound at the specificity site determines substrate preference. It seems probable that ATP makes the enzyme reduce CDP and UDP, dGTP favors ADP reduction and dTTP favors GDP reduction. In terms of biological role, ribonucleoside-diphosphate reductase holoenzyme provides the precursors necessary for viral DNA synthesis. Allows virus growth in non-dividing cells. Catalyzes the biosynthesis of deoxyribonucleotides from the corresponding ribonucleotides. The polypeptide is Ribonucleoside-diphosphate reductase large subunit (Aedes vexans (Inland floodwater mosquito)).